Here is a 135-residue protein sequence, read N- to C-terminus: MAKITVVNNQDELYKVINQKKSEGYLETELAVISKSKLHLDDLHNSQISLMATSGSFSDRMSRLLTGEDGEETVLSRYDLTDNELEGYKQDILNDKMLVVANSDRSSHDEVEDNNAAYKEVDITHYAAESEGPKA.

Belongs to the UPF0355 family.

The chain is UPF0355 protein SE_2351 from Staphylococcus epidermidis (strain ATCC 12228 / FDA PCI 1200).